Reading from the N-terminus, the 412-residue chain is Probable tRNA sulfurtransferase (412 aa).

Residues 1-22 (MPDIFTDNTDKQDSDPSRQGFE) form a disordered region. In terms of domain architecture, THUMP spans 82–190 (PRAAEAAADV…QNLAYVYLET (109 aa)). ATP contacts are provided by residues 208–209 (LM), K292, G314, and Q323.

Belongs to the ThiI family.

It localises to the cytoplasm. The enzyme catalyses [ThiI sulfur-carrier protein]-S-sulfanyl-L-cysteine + a uridine in tRNA + 2 reduced [2Fe-2S]-[ferredoxin] + ATP + H(+) = [ThiI sulfur-carrier protein]-L-cysteine + a 4-thiouridine in tRNA + 2 oxidized [2Fe-2S]-[ferredoxin] + AMP + diphosphate. It carries out the reaction [ThiS sulfur-carrier protein]-C-terminal Gly-Gly-AMP + S-sulfanyl-L-cysteinyl-[cysteine desulfurase] + AH2 = [ThiS sulfur-carrier protein]-C-terminal-Gly-aminoethanethioate + L-cysteinyl-[cysteine desulfurase] + A + AMP + 2 H(+). Its pathway is cofactor biosynthesis; thiamine diphosphate biosynthesis. Functionally, catalyzes the ATP-dependent transfer of a sulfur to tRNA to produce 4-thiouridine in position 8 of tRNAs, which functions as a near-UV photosensor. Also catalyzes the transfer of sulfur to the sulfur carrier protein ThiS, forming ThiS-thiocarboxylate. This is a step in the synthesis of thiazole, in the thiamine biosynthesis pathway. The sulfur is donated as persulfide by IscS. In Methanosarcina acetivorans (strain ATCC 35395 / DSM 2834 / JCM 12185 / C2A), this protein is Probable tRNA sulfurtransferase.